Reading from the N-terminus, the 109-residue chain is Small ribosomal subunit protein bS6 (109 aa).

Belongs to the bacterial ribosomal protein bS6 family.

Functionally, binds together with bS18 to 16S ribosomal RNA. This chain is Small ribosomal subunit protein bS6, found in Ehrlichia chaffeensis (strain ATCC CRL-10679 / Arkansas).